The chain runs to 270 residues: Aliphatic sulfonates import ATP-binding protein SsuB 1 (270 aa).

Residues 18–232 (VQLRNVVRQF…DSGQAGFQLI (215 aa)) enclose the ABC transporter domain. An ATP-binding site is contributed by 50-57 (GASGSGKT). The segment at 247–270 (PDTAPQASAPDSTFSELRRVASAR) is disordered. Residues 251–261 (PQASAPDSTFS) show a composition bias toward polar residues.

This sequence belongs to the ABC transporter superfamily. Aliphatic sulfonates importer (TC 3.A.1.17.2) family. The complex is composed of two ATP-binding proteins (SsuB), two transmembrane proteins (SsuC) and a solute-binding protein (SsuA).

The protein localises to the cell inner membrane. It carries out the reaction ATP + H2O + aliphatic sulfonate-[sulfonate-binding protein]Side 1 = ADP + phosphate + aliphatic sulfonateSide 2 + [sulfonate-binding protein]Side 1.. In terms of biological role, part of the ABC transporter complex SsuABC involved in aliphatic sulfonates import. Responsible for energy coupling to the transport system. This Pseudomonas syringae pv. tomato (strain ATCC BAA-871 / DC3000) protein is Aliphatic sulfonates import ATP-binding protein SsuB 1.